Reading from the N-terminus, the 114-residue chain is Hydrogenase maturation factor HypA (114 aa).

His2 contributes to the Ni(2+) binding site. Zn(2+) is bound by residues Cys70, Cys73, Cys86, and Cys89.

This sequence belongs to the HypA/HybF family.

Functionally, involved in the maturation of [NiFe] hydrogenases. Required for nickel insertion into the metal center of the hydrogenase. In Trichodesmium erythraeum (strain IMS101), this protein is Hydrogenase maturation factor HypA.